A 1058-amino-acid chain; its full sequence is Outer capsid protein VP4 (1058 aa).

This sequence belongs to the orthoreovirus lambda-2 protein family.

It is found in the virion. It carries out the reaction a 5'-end diphospho-ribonucleoside in mRNA + GTP + H(+) = a 5'-end (5'-triphosphoguanosine)-ribonucleoside in mRNA + diphosphate. The catalysed reaction is a 5'-end (5'-triphosphoguanosine)-ribonucleoside in mRNA + S-adenosyl-L-methionine = a 5'-end (N(7)-methyl 5'-triphosphoguanosine)-ribonucleoside in mRNA + S-adenosyl-L-homocysteine. In terms of biological role, outer capsid protein involved in mRNA capping. Catalyzes the last 3 enzymatic activities for formation of the 5' cap structure on the viral plus-strand transcripts, namely the RNA guanylyltransferase, RNA-7N- and RNA-2'O-methyltransferase activities. This is Outer capsid protein VP4 (S4) from Lymantria dispar cypovirus 1 (isolate Rao) (LdCPV-1).